We begin with the raw amino-acid sequence, 263 residues long: MPRLTVGTKNMLYPLQKTLAVGSCKPEQVPIRSLASVVESSSKILDKSGSDREVDINVSEKIYKWTKAGIEQGKEHFKVGGNKVYFPKARIILLRPNAKHTPYQAKFIVPKSFNKLDLRDYLYHIYGLRAMNITTQLLHGKFNRMNLQTTRFREPQIKKMTIEMEEPFIWPEEPRPDENSFWDSTTPDNMEKYREERLNCLGSDANKPGTAFDGVVGPYERVAQPFIPRFLKREIDNKRERHAAELQRADKLIALNRYIEDLH.

The transit peptide at 1–45 (MPRLTVGTKNMLYPLQKTLAVGSCKPEQVPIRSLASVVESSSKIL) directs the protein to the mitochondrion.

It belongs to the universal ribosomal protein uL23 family. As to quaternary structure, component of the mitochondrial large ribosomal subunit (mt-LSU). Mature yeast 74S mitochondrial ribosomes consist of a small (37S) and a large (54S) subunit. The 37S small subunit contains a 15S ribosomal RNA (15S mt-rRNA) and 34 different proteins. The 54S large subunit contains a 21S rRNA (21S mt-rRNA) and 46 different proteins. uL23m forms the wall of the exit tunnel. Interacts with the C-terminus of OXA1.

Its subcellular location is the mitochondrion. In terms of biological role, component of the mitochondrial ribosome (mitoribosome), a dedicated translation machinery responsible for the synthesis of mitochondrial genome-encoded proteins, including at least some of the essential transmembrane subunits of the mitochondrial respiratory chain. The mitoribosomes are attached to the mitochondrial inner membrane and translation products are cotranslationally integrated into the membrane. This is Large ribosomal subunit protein uL23m (MRP20) from Saccharomyces cerevisiae (strain ATCC 204508 / S288c) (Baker's yeast).